The following is a 205-amino-acid chain: Inosine triphosphate pyrophosphatase (205 aa).

ITP is bound at residue 20–25; the sequence is TGNAKK. Residue Glu48 coordinates Mg(2+). Residues Lys60, 76–77, Lys93, 152–155, Lys175, and 180–181 contribute to the ITP site; these read DT, FGWD, and HR.

It belongs to the HAM1 NTPase family. In terms of assembly, homodimer. Requires Mg(2+) as cofactor. Mn(2+) is required as a cofactor.

The protein localises to the cytoplasm. The catalysed reaction is ITP + H2O = IMP + diphosphate + H(+). It catalyses the reaction dITP + H2O = dIMP + diphosphate + H(+). It carries out the reaction XTP + H2O = XMP + diphosphate + H(+). Pyrophosphatase that hydrolyzes non-canonical purine nucleotides such as inosine triphosphate (ITP), deoxyinosine triphosphate (dITP) or xanthosine 5'-triphosphate (XTP) to their respective monophosphate derivatives. The enzyme does not distinguish between the deoxy- and ribose forms. Probably excludes non-canonical purines from RNA and DNA precursor pools, thus preventing their incorporation into RNA and DNA and avoiding chromosomal lesions. In Oryza sativa subsp. japonica (Rice), this protein is Inosine triphosphate pyrophosphatase.